A 212-amino-acid polypeptide reads, in one-letter code: Imidazole glycerol phosphate synthase subunit HisH (212 aa).

Residues 3 to 212 (TVAVIDYGMG…QNFAAWDGRW (210 aa)) enclose the Glutamine amidotransferase type-1 domain. Catalysis depends on cysteine 81, which acts as the Nucleophile. Residues histidine 190 and glutamate 192 contribute to the active site.

Heterodimer of HisH and HisF.

It localises to the cytoplasm. It catalyses the reaction 5-[(5-phospho-1-deoxy-D-ribulos-1-ylimino)methylamino]-1-(5-phospho-beta-D-ribosyl)imidazole-4-carboxamide + L-glutamine = D-erythro-1-(imidazol-4-yl)glycerol 3-phosphate + 5-amino-1-(5-phospho-beta-D-ribosyl)imidazole-4-carboxamide + L-glutamate + H(+). It carries out the reaction L-glutamine + H2O = L-glutamate + NH4(+). It participates in amino-acid biosynthesis; L-histidine biosynthesis; L-histidine from 5-phospho-alpha-D-ribose 1-diphosphate: step 5/9. In terms of biological role, IGPS catalyzes the conversion of PRFAR and glutamine to IGP, AICAR and glutamate. The HisH subunit catalyzes the hydrolysis of glutamine to glutamate and ammonia as part of the synthesis of IGP and AICAR. The resulting ammonia molecule is channeled to the active site of HisF. This is Imidazole glycerol phosphate synthase subunit HisH from Pseudomonas savastanoi pv. phaseolicola (strain 1448A / Race 6) (Pseudomonas syringae pv. phaseolicola (strain 1448A / Race 6)).